The sequence spans 217 residues: tRNA (guanine-N(7)-)-methyltransferase (217 aa).

Positions 45, 70, 97, and 119 each coordinate S-adenosyl-L-methionine. The active site involves D119. Substrate is bound at residue K123. Residues 125–130 (RHEKRR) are interaction with RNA. Residues D155 and 195 to 198 (TEYE) each bind substrate.

It belongs to the class I-like SAM-binding methyltransferase superfamily. TrmB family.

It catalyses the reaction guanosine(46) in tRNA + S-adenosyl-L-methionine = N(7)-methylguanosine(46) in tRNA + S-adenosyl-L-homocysteine. It participates in tRNA modification; N(7)-methylguanine-tRNA biosynthesis. Functionally, catalyzes the formation of N(7)-methylguanine at position 46 (m7G46) in tRNA. The protein is tRNA (guanine-N(7)-)-methyltransferase of Lactobacillus helveticus (strain DPC 4571).